Consider the following 545-residue polypeptide: Transducer protein Htr7 (545 aa).

3 consecutive transmembrane segments (helical) span residues 10–30 (AVVA…AAAL), 44–64 (FWMA…SLML), and 80–100 (PLMA…LAIV). The tract at residues 111–157 (AQRRQEAEEERAEAERAREKAEQKQAEAERQTAEAESAKQDARERSA) is disordered. Positions 123–157 (EAERAREKAEQKQAEAERQTAEAESAKQDARERSA) are enriched in basic and acidic residues. Residues 164–217 (ADLESQATEVGATLEAASDGDLTARVDATTDNAEIAEVATVVNDMLTTMERTID) enclose the HAMP domain. In terms of domain architecture, Methyl-accepting transducer spans 236–476 (GAKEIQDASQ…RVVSSVDDIA (241 aa)). Residue Glu-281 is modified to Glutamate methyl ester (Glu). The tract at residues 521 to 545 (LNEFRTEATGTAHGEATDAPAGQSD) is disordered. Residues 527-539 (EATGTAHGEATDA) show a composition bias toward low complexity.

Belongs to the methyl-accepting chemotaxis (MCP) protein family. Post-translationally, methylated by CheR.

The protein localises to the cell membrane. Its function is as follows. Potentially involved in chemo- or phototactic signal transduction. The polypeptide is Transducer protein Htr7 (htr7) (Halobacterium salinarum (strain ATCC 29341 / DSM 671 / R1)).